A 136-amino-acid polypeptide reads, in one-letter code: Large-conductance mechanosensitive channel (136 aa).

The next 2 membrane-spanning stretches (helical) occupy residues 9–29 (AFAS…GAAF) and 79–99 (IQTV…LKAI).

This sequence belongs to the MscL family. As to quaternary structure, homopentamer.

The protein resides in the cell inner membrane. Channel that opens in response to stretch forces in the membrane lipid bilayer. May participate in the regulation of osmotic pressure changes within the cell. This Shewanella sp. (strain MR-4) protein is Large-conductance mechanosensitive channel.